Consider the following 188-residue polypeptide: MGTGFHGTTILSIRKDDKVVMIGDGQVTMGNAVVVKSTAQKVKRLSNGKIISGFAGSTADAFTLFERLESKLEAHPGQLLRACVELAKDWRTDKFLRRLEAMMIVADARGTLILNGAGDVIEPEDSVAAIGSGGNYALAAAKALIVHASDLDAFQIAEAAMKIAAKICVFTNENFTVEVIDCASKECS.

Thr8 is an active-site residue. The Na(+) site is built by Ala165, Cys168, and Thr171.

The protein belongs to the peptidase T1B family. HslV subfamily. In terms of assembly, a double ring-shaped homohexamer of HslV is capped on each side by a ring-shaped HslU homohexamer. The assembly of the HslU/HslV complex is dependent on binding of ATP.

The protein localises to the cytoplasm. The enzyme catalyses ATP-dependent cleavage of peptide bonds with broad specificity.. Its activity is regulated as follows. Allosterically activated by HslU binding. Protease subunit of a proteasome-like degradation complex believed to be a general protein degrading machinery. This Neorickettsia sennetsu (strain ATCC VR-367 / Miyayama) (Ehrlichia sennetsu) protein is ATP-dependent protease subunit HslV.